The following is a 172-amino-acid chain: Large ribosomal subunit protein uL10 (172 aa).

Belongs to the universal ribosomal protein uL10 family. Part of the ribosomal stalk of the 50S ribosomal subunit. The N-terminus interacts with L11 and the large rRNA to form the base of the stalk. The C-terminus forms an elongated spine to which L12 dimers bind in a sequential fashion forming a multimeric L10(L12)X complex.

In terms of biological role, forms part of the ribosomal stalk, playing a central role in the interaction of the ribosome with GTP-bound translation factors. The protein is Large ribosomal subunit protein uL10 of Rhizobium meliloti (strain 1021) (Ensifer meliloti).